The following is a 343-amino-acid chain: Ion-translocating oxidoreductase complex subunit D (343 aa).

The next 4 helical transmembrane spans lie at 24–44 (VLLA…AGTL), 45–65 (YNLA…LAAR), 69–91 (LAFF…ALPP), and 124–144 (AMLG…SWPA). An FMN phosphoryl threonine modification is found at Thr-171. The next 5 helical transmembrane spans lie at 197–217 (FGGA…LYLL), 221–241 (LITW…SLLF), 251–271 (GSPL…FIVT), 284–304 (LVFG…GGYP), and 305–325 (DAVA…DYYT).

This sequence belongs to the NqrB/RnfD family. In terms of assembly, the complex is composed of six subunits: RnfA, RnfB, RnfC, RnfD, RnfE and RnfG. Requires FMN as cofactor.

It is found in the cell inner membrane. In terms of biological role, part of a membrane-bound complex that couples electron transfer with translocation of ions across the membrane. The sequence is that of Ion-translocating oxidoreductase complex subunit D from Ectopseudomonas mendocina (strain ymp) (Pseudomonas mendocina).